The chain runs to 109 residues: Arminin 6560 (109 aa).

The first 21 residues, 1–21 (MKCLFGFLFIMLVAFLQDVHG), serve as a signal peptide directing secretion. A propeptide spanning residues 22 to 77 (VDSCIGKPCKVKGEDMKDIKEKKIEDIKEEIKNVKKEIFEDVDDELLDDNIRDDKI) is cleaved from the precursor. The residue at position 106 (I106) is an Isoleucine amide.

This sequence belongs to the arminin family. Expressed in the ectodermal epithelium.

It localises to the secreted. It is found in the target cell membrane. Its function is as follows. Antimicrobial peptide with a broad-spectrum antimicrobial activity. Keeps its antibacterial activity under a wide range of salt concentrations that mimic physiological conditions of human blood, which is surprising, since Hydra is an obligate freshwater animal with nearly no salt tolerance. Does not affect red blood cells. The sequence is that of Arminin 6560 from Hydra vulgaris (Hydra).